The following is a 371-amino-acid chain: NADP-dependent oxidoreductase lnaE (371 aa).

NADP(+) contacts are provided by residues 172-175 (DEIG), lysine 198, tyrosine 214, asparagine 237, 277-283 (YGTIAEQ), and 307-309 (FGL).

This sequence belongs to the NADP-dependent oxidoreductase L4BD family.

It participates in secondary metabolite biosynthesis. NADP-dependent oxidoreductase; part of the lna gene cluster that mediates the biosynthesis of diastereomeric piperazines. Lna and lnb clusters encode sets of enzymes that produce overlapping sets of previously undescribed metabolites such as piperazinomycin-like metabolites or morpholine. The lna and lnb biosynthetic pathways appear to be part of a signaling network that controls the formation of sclerotia, a resilient overwintering structure. One primary function of the non-canonical nonribosomal peptide synthetases lnaA and lnbA consists in the reduction of L-tyrosine. The presence in the clusters of tailoring enzymes such as the oxidoreductases lnaB, lnbB, lnaE or lnbE, as well as of the cytochrome P450 monooxygenases lnaC, lnaD, or lnbC, might explain formation of various diastereomeric piperazines. This is NADP-dependent oxidoreductase lnaE from Aspergillus flavus (strain ATCC 200026 / FGSC A1120 / IAM 13836 / NRRL 3357 / JCM 12722 / SRRC 167).